A 238-amino-acid polypeptide reads, in one-letter code: MGSASGEEREGPLGLYLEIKMQRKDIVSPVDTMGCSITPSCRTEEERRFHILVSLLLSSQTKDEVTYEAMARLRKLLPESAATDGEARGGLTIERVANSDVKHINECIKKVGFHNRKAANLKKIAEILREKGLPREMKDLISLPGIGNKMALLYMSHACNRTVGISVDTHVHRISNRIGLVRTRDVESTRRELERVVPRKEWKTINNILVGFGQTICVAKRPRCEECCIRGRCPSSLF.

Positions 129–155 constitute a HhH domain; the sequence is REKGLPREMKDLISLPGIGNKMALLYM. Lysine 149 serves as the catalytic Nucleophile; for N-glycosylase activity. The [4Fe-4S] cluster site is built by cysteine 217, cysteine 224, cysteine 227, and cysteine 233.

Belongs to the Nth/MutY family. Requires [4Fe-4S] cluster as cofactor.

It is found in the nucleus. The protein localises to the mitochondrion. It carries out the reaction 2'-deoxyribonucleotide-(2'-deoxyribose 5'-phosphate)-2'-deoxyribonucleotide-DNA = a 3'-end 2'-deoxyribonucleotide-(2,3-dehydro-2,3-deoxyribose 5'-phosphate)-DNA + a 5'-end 5'-phospho-2'-deoxyribonucleoside-DNA + H(+). Bifunctional DNA N-glycosylase with associated apurinic/apyrimidinic (AP) lyase function that catalyzes the first step in base excision repair (BER), the primary repair pathway for the repair of oxidative DNA damage. The DNA N-glycosylase activity releases the damaged DNA base from DNA by cleaving the N-glycosidic bond, leaving an AP site. The AP lyase activity cleaves the phosphodiester bond 3' to the AP site by a beta-elimination. Primarily recognizes and repairs oxidative base damage of pyrimidines. The chain is Endonuclease III homolog from Encephalitozoon cuniculi (strain GB-M1) (Microsporidian parasite).